The chain runs to 366 residues: Leucine-rich repeat-containing protein 58 (366 aa).

The residue at position 19 (serine 19) is a Phosphoserine. LRR repeat units lie at residues 40–61 (ALLR…LGGG), 64–86 (HLQL…LTLS), 87–108 (GLRT…PKGL), 116–138 (SLQV…LELR), 139–161 (ALQT…ENLR), 162–184 (SLEC…ANLP), 185–206 (SLNY…LSQL), 208–229 (SLRS…ILNL), and 231–251 (HLEE…RDLT). Over residues 337 to 346 (ASHSSTSQSE) the composition is skewed to low complexity. A disordered region spans residues 337-356 (ASHSSTSQSESDSEDEASVA).

This Mus musculus (Mouse) protein is Leucine-rich repeat-containing protein 58 (Lrrc58).